The chain runs to 98 residues: Small ribosomal subunit protein bS6 (98 aa).

Belongs to the bacterial ribosomal protein bS6 family.

In terms of biological role, binds together with bS18 to 16S ribosomal RNA. The protein is Small ribosomal subunit protein bS6 of Limosilactobacillus reuteri (strain DSM 20016) (Lactobacillus reuteri).